Consider the following 338-residue polypeptide: P2Y purinoceptor 14 (338 aa).

Residues 1-29 (MNNSTTTDPPNQPCSWNTLITKQIIPVLY) lie on the Extracellular side of the membrane. N-linked (GlcNAc...) asparagine glycosylation is found at N2 and N3. The helical transmembrane segment at 30–50 (GMVFITGLLLNGISGWIFFYV) threads the bilayer. Topologically, residues 51–55 (PSSKS) are cytoplasmic. Residues 56 to 76 (FIIYLKNIVVADFLMGLTFPF) traverse the membrane as a helical segment. The Extracellular segment spans residues 77-96 (KVLGDSGLGPWQVNVFVCRV). An intrachain disulfide couples C94 to C172. Residues 97 to 117 (SAVIFYVNMYVSIVFFGLISF) form a helical membrane-spanning segment. Residues 118–139 (DRYYKIVKPLLTSIVQSVNYSK) lie on the Cytoplasmic side of the membrane. A helical membrane pass occupies residues 140–160 (LLSVLVWMLMLLLAVPNIILT). Topologically, residues 161 to 188 (NQGVKEVTKIQCMELKNELGRKWHKASN) are extracellular. A helical membrane pass occupies residues 189 to 209 (YIFVSIFWVVFLLLIVFYTAI). Residues 210-234 (TRKIFKSHLKSRKNSTSVKRKSSRN) are Cytoplasmic-facing. Residues 235 to 255 (IFSIVLVFVVCFVPYHIARIP) form a helical membrane-spanning segment. The Extracellular portion of the chain corresponds to 256–278 (YTKSQTEGHYSCRTKETLLYAKE). The helical transmembrane segment at 279–299 (FTLLLSAANVCLDPIIYFFLC) threads the bilayer. At 300 to 338 (QPFREVLNKKLHMSLKVQNDLEVSKTKRENAIHESTDTL) the chain is on the cytoplasmic side.

Belongs to the G-protein coupled receptor 1 family.

The protein localises to the cell membrane. In terms of biological role, receptor for UDP-glucose coupled to G-proteins. The polypeptide is P2Y purinoceptor 14 (P2ry14) (Mus musculus (Mouse)).